We begin with the raw amino-acid sequence, 339 residues long: Glucokinase (339 aa).

Position 16–21 (16–21 (GDIGGT)) interacts with ATP.

This sequence belongs to the bacterial glucokinase family.

It is found in the cytoplasm. The catalysed reaction is D-glucose + ATP = D-glucose 6-phosphate + ADP + H(+). The chain is Glucokinase from Pseudomonas paraeruginosa (strain DSM 24068 / PA7) (Pseudomonas aeruginosa (strain PA7)).